The sequence spans 489 residues: Putative L,D-transpeptidase HI_1667 (489 aa).

The helical transmembrane segment at 10–29 (LSLFALSLSMMMSGCVLVGL) threads the bilayer. The 180-residue stretch at 254–433 (NGIFVNIPSY…ETRKNTVLAS (180 aa)) folds into the L,D-TPase catalytic domain. The Proton donor/acceptor role is filled by His-384. The Nucleophile role is filled by Cys-403.

It belongs to the YkuD family.

It localises to the membrane. Its pathway is cell wall biogenesis; peptidoglycan biosynthesis. The polypeptide is Putative L,D-transpeptidase HI_1667 (Haemophilus influenzae (strain ATCC 51907 / DSM 11121 / KW20 / Rd)).